We begin with the raw amino-acid sequence, 460 residues long: Argininosuccinate lyase (460 aa).

The protein belongs to the lyase 1 family. Argininosuccinate lyase subfamily.

It localises to the cytoplasm. It catalyses the reaction 2-(N(omega)-L-arginino)succinate = fumarate + L-arginine. Its pathway is amino-acid biosynthesis; L-arginine biosynthesis; L-arginine from L-ornithine and carbamoyl phosphate: step 3/3. In Mannheimia succiniciproducens (strain KCTC 0769BP / MBEL55E), this protein is Argininosuccinate lyase.